The primary structure comprises 347 residues: 4-hydroxy-2-oxovalerate aldolase 1 (347 aa).

One can recognise a Pyruvate carboxyltransferase domain in the interval 8–261 (VTLYDMSLLX…ETGIDLYKIM (254 aa)). The Proton acceptor role is filled by histidine 20. Substrate contacts are provided by serine 171 and histidine 200. Mn(2+) contacts are provided by histidine 200 and histidine 202. Tyrosine 291 is a binding site for substrate.

Belongs to the 4-hydroxy-2-oxovalerate aldolase family.

The enzyme catalyses (S)-4-hydroxy-2-oxopentanoate = acetaldehyde + pyruvate. This chain is 4-hydroxy-2-oxovalerate aldolase 1 (salH), found in Metapseudomonas furukawaii (Pseudomonas furukawaii).